The sequence spans 767 residues: Dipeptidyl peptidase 4 (767 aa).

Residues 1–6 (MKTPWK) lie on the Cytoplasmic side of the membrane. Residues 7 to 28 (VLLGLLGVAALVTIITVPVVLL) traverse the membrane as a helical; Signal-anchor for type II membrane protein segment. Topologically, residues 29–767 (NKDEAAADSR…HFLQQCFSLR (739 aa)) are extracellular. N-linked (GlcNAc...) asparagine glycosylation is found at N83, N90, N148, N217, N227, and N319. Intrachain disulfides connect C326–C337, C383–C395, C445–C448, and C455–C473. The N-linked (GlcNAc...) asparagine glycan is linked to N521. S631 functions as the Charge relay system in the catalytic mechanism. C650 and C763 are disulfide-bonded. An N-linked (GlcNAc...) asparagine glycan is attached at N686. Catalysis depends on charge relay system residues D709 and H741.

Belongs to the peptidase S9B family. DPPIV subfamily. Monomer. Homodimer. Heterodimer with Seprase (FAP). Requires homodimerization for optimal dipeptidyl peptidase activity and T-cell costimulation. Found in a membrane raft complex, at least composed of BCL10, CARD11, DPP4 and IKBKB. Associates with collagen. Interacts with PTPRC; the interaction is enhanced in an interleukin-12-dependent manner in activated lymphocytes. Interacts (via extracellular domain) with ADA; does not inhibit its dipeptidyl peptidase activity. Interacts with CAV1 (via the N-terminus); the interaction is direct. Interacts (via cytoplasmic tail) with CARD11 (via PDZ domain); its homodimerization is necessary for interaction with CARD11. Interacts with IGF2R; the interaction is direct. Interacts with GPC3. The soluble form (Dipeptidyl peptidase 4 soluble form also named SDPP) derives from the membrane form (Dipeptidyl peptidase 4 membrane form also named MDPP) by proteolytic processing. Post-translationally, N- and O-Glycosylated. In terms of processing, phosphorylated. Mannose 6-phosphate residues in the carbohydrate moiety are necessary for interaction with IGF2R in activated T-cells. Mannose 6-phosphorylation is induced during T-cell activation. In terms of tissue distribution, expressed in bile ducts and other epithelial brush borders (small intestine, kidney, colon, pancreatic duct); acinar structures in salivary glands; endothelial structures and T cell areas in thymus, spleen and lymph node.

It is found in the secreted. The protein resides in the cell membrane. The protein localises to the apical cell membrane. Its subcellular location is the cell projection. It localises to the invadopodium membrane. It is found in the lamellipodium membrane. The protein resides in the cell junction. The protein localises to the membrane raft. It carries out the reaction Release of an N-terminal dipeptide, Xaa-Yaa-|-Zaa-, from a polypeptide, preferentially when Yaa is Pro, provided Zaa is neither Pro nor hydroxyproline.. Its activity is regulated as follows. Inhibited by GPC3 and diprotin A. In terms of biological role, cell surface glycoprotein receptor involved in the costimulatory signal essential for T-cell receptor (TCR)-mediated T-cell activation. Acts as a positive regulator of T-cell coactivation, by binding at least ADA, CAV1, IGF2R, and PTPRC. Its binding to CAV1 and CARD11 induces T-cell proliferation and NF-kappa-B activation in a T-cell receptor/CD3-dependent manner. Its interaction with ADA also regulates lymphocyte-epithelial cell adhesion. In association with FAP is involved in the pericellular proteolysis of the extracellular matrix (ECM), the migration and invasion of endothelial cells into the ECM. May be involved in the promotion of lymphatic endothelial cells adhesion, migration and tube formation. When overexpressed, enhanced cell proliferation, a process inhibited by GPC3. Also acts as a serine exopeptidase with a dipeptidyl peptidase activity that regulates various physiological processes by cleaving peptides in the circulation, including many chemokines, mitogenic growth factors, neuropeptides and peptide hormones. Removes N-terminal dipeptides sequentially from polypeptides having unsubstituted N-termini provided that the penultimate residue is proline. The chain is Dipeptidyl peptidase 4 (Dpp4) from Rattus norvegicus (Rat).